Here is a 152-residue protein sequence, read N- to C-terminus: Large ribosomal subunit protein bL9 (152 aa).

It belongs to the bacterial ribosomal protein bL9 family.

Binds to the 23S rRNA. The protein is Large ribosomal subunit protein bL9 of Thermosynechococcus vestitus (strain NIES-2133 / IAM M-273 / BP-1).